The sequence spans 372 residues: Saccharopine dehydrogenase [NAD(+), L-lysine-forming] (372 aa).

L-saccharopine is bound by residues arginine 18 and lysine 77. Lysine 77 functions as the Proton acceptor in the catalytic mechanism. Histidine 95 acts as the Proton donor in catalysis. Glutamine 100 is an L-saccharopine binding site. Arginine 129 is an NAD(+) binding site. Residues arginine 130 and phenylalanine 134 each coordinate L-saccharopine. NAD(+)-binding positions include 200–201 (GR), aspartate 224, threonine 228, tyrosine 248, and valine 275. A disulfide bond links cysteine 202 and cysteine 246. 276–278 (SAD) lines the L-saccharopine pocket. 316–319 (IDHL) is a binding site for NAD(+).

The protein belongs to the AlaDH/PNT family. As to quaternary structure, monomer.

The catalysed reaction is L-saccharopine + NAD(+) + H2O = L-lysine + 2-oxoglutarate + NADH + H(+). It functions in the pathway amino-acid biosynthesis; L-lysine biosynthesis via AAA pathway; L-lysine from L-alpha-aminoadipate (fungal route): step 3/3. Its function is as follows. Catalyzes the NAD(+)-dependent cleavage of saccharopine to L-lysine and 2-oxoglutarate, the final step in the alpha-aminoadipate (AAA) pathway for lysin biosynthesis. The sequence is that of Saccharopine dehydrogenase [NAD(+), L-lysine-forming] (lys-4) from Neurospora crassa (strain ATCC 24698 / 74-OR23-1A / CBS 708.71 / DSM 1257 / FGSC 987).